Reading from the N-terminus, the 238-residue chain is Phosphoribosylaminoimidazole-succinocarboxamide synthase (238 aa).

Belongs to the SAICAR synthetase family.

It carries out the reaction 5-amino-1-(5-phospho-D-ribosyl)imidazole-4-carboxylate + L-aspartate + ATP = (2S)-2-[5-amino-1-(5-phospho-beta-D-ribosyl)imidazole-4-carboxamido]succinate + ADP + phosphate + 2 H(+). The protein operates within purine metabolism; IMP biosynthesis via de novo pathway; 5-amino-1-(5-phospho-D-ribosyl)imidazole-4-carboxamide from 5-amino-1-(5-phospho-D-ribosyl)imidazole-4-carboxylate: step 1/2. This Methanococcoides burtonii (strain DSM 6242 / NBRC 107633 / OCM 468 / ACE-M) protein is Phosphoribosylaminoimidazole-succinocarboxamide synthase.